The sequence spans 319 residues: tRNA uridine(34) hydroxylase (319 aa).

One can recognise a Rhodanese domain in the interval 127-221; it reads KQEDTVIIDA…YGKDPEVQGE (95 aa). The Cysteine persulfide intermediate role is filled by cysteine 181.

It belongs to the TrhO family.

The enzyme catalyses uridine(34) in tRNA + AH2 + O2 = 5-hydroxyuridine(34) in tRNA + A + H2O. Catalyzes oxygen-dependent 5-hydroxyuridine (ho5U) modification at position 34 in tRNAs. The sequence is that of tRNA uridine(34) hydroxylase from Bacillus cereus (strain AH187).